The primary structure comprises 234 residues: Probable pectate lyase F (234 aa).

Residues 1 to 17 (MRSTAAVLSILLPGALA) form the signal peptide. Asn168 carries N-linked (GlcNAc...) asparagine glycosylation.

This sequence belongs to the polysaccharide lyase 3 family. Ca(2+) serves as cofactor.

It is found in the secreted. It carries out the reaction Eliminative cleavage of (1-&gt;4)-alpha-D-galacturonan to give oligosaccharides with 4-deoxy-alpha-D-galact-4-enuronosyl groups at their non-reducing ends.. Its function is as follows. Pectinolytic enzyme consist of four classes of enzymes: pectin lyase, polygalacturonase, pectin methylesterase and rhamnogalacturonase. Among pectinolytic enzymes, pectin lyase is the most important in depolymerization of pectin, since it cleaves internal glycosidic bonds of highly methylated pectins. Favors pectate, the anion, over pectin, the methyl ester. The chain is Probable pectate lyase F (plyF) from Aspergillus terreus (strain NIH 2624 / FGSC A1156).